Consider the following 192-residue polypeptide: UPF0312 protein PputGB1_5030 (192 aa).

An N-terminal signal peptide occupies residues 1–23 (MLKKTFAALALGTALLSAGQAMA).

The protein belongs to the UPF0312 family. Type 1 subfamily.

The protein localises to the periplasm. The sequence is that of UPF0312 protein PputGB1_5030 from Pseudomonas putida (strain GB-1).